Consider the following 210-residue polypeptide: Protein SgcE (210 aa).

Substrate is bound at residue S6. A divalent metal cation-binding residues include H31, D33, and H64. The active-site Proton acceptor is the D33. Substrate-binding positions include H64, 140-143 (DGQG), 169-171 (DGG), and 191-192 (GR). Residue D169 coordinates a divalent metal cation. Catalysis depends on D169, which acts as the Proton donor.

It belongs to the ribulose-phosphate 3-epimerase family. Co(2+) serves as cofactor. The cofactor is Fe(2+). Requires Mn(2+) as cofactor. It depends on Zn(2+) as a cofactor.

The protein operates within carbohydrate degradation. Functionally, probable pentose-5-phosphate 3-epimerase. The sequence is that of Protein SgcE (sgcE) from Escherichia coli (strain K12).